A 55-amino-acid polypeptide reads, in one-letter code: ATP synthase F(0) complex subunit 8 (55 aa).

The helical transmembrane segment at 8 to 24 threads the bilayer; the sequence is PWFSIMVMTWLTLALLI. Residues 35 to 55 form a disordered region; sequence NPPSKKPSLITKPTPWAWPWT.

It belongs to the ATPase protein 8 family. Component of the ATP synthase complex composed at least of ATP5F1A/subunit alpha, ATP5F1B/subunit beta, ATP5MC1/subunit c (homooctomer), MT-ATP6/subunit a, MT-ATP8/subunit 8, ATP5ME/subunit e, ATP5MF/subunit f, ATP5MG/subunit g, ATP5MK/subunit k, ATP5MJ/subunit j, ATP5F1C/subunit gamma, ATP5F1D/subunit delta, ATP5F1E/subunit epsilon, ATP5PF/subunit F6, ATP5PB/subunit b, ATP5PD/subunit d, ATP5PO/subunit OSCP. ATP synthase complex consists of a soluble F(1) head domain (subunits alpha(3) and beta(3)) - the catalytic core - and a membrane F(0) domain - the membrane proton channel (subunits c, a, 8, e, f, g, k and j). These two domains are linked by a central stalk (subunits gamma, delta, and epsilon) rotating inside the F1 region and a stationary peripheral stalk (subunits F6, b, d, and OSCP).

Its subcellular location is the mitochondrion membrane. Subunit 8, of the mitochondrial membrane ATP synthase complex (F(1)F(0) ATP synthase or Complex V) that produces ATP from ADP in the presence of a proton gradient across the membrane which is generated by electron transport complexes of the respiratory chain. ATP synthase complex consist of a soluble F(1) head domain - the catalytic core - and a membrane F(1) domain - the membrane proton channel. These two domains are linked by a central stalk rotating inside the F(1) region and a stationary peripheral stalk. During catalysis, ATP synthesis in the catalytic domain of F(1) is coupled via a rotary mechanism of the central stalk subunits to proton translocation. In vivo, can only synthesize ATP although its ATP hydrolase activity can be activated artificially in vitro. Part of the complex F(0) domain. The sequence is that of ATP synthase F(0) complex subunit 8 from Anas platyrhynchos (Mallard).